The following is a 407-amino-acid chain: Argininosuccinate synthase (407 aa).

ATP is bound by residues 16 to 24 and alanine 44; that span reads AYSGGLDTS. Positions 96 and 101 each coordinate L-citrulline. Glycine 126 is a binding site for ATP. L-aspartate contacts are provided by threonine 128, asparagine 132, and aspartate 133. Asparagine 132 contributes to the L-citrulline binding site. L-citrulline is bound by residues arginine 136, serine 185, serine 194, glutamate 270, and tyrosine 282.

It belongs to the argininosuccinate synthase family. Type 1 subfamily. Homotetramer.

It localises to the cytoplasm. It catalyses the reaction L-citrulline + L-aspartate + ATP = 2-(N(omega)-L-arginino)succinate + AMP + diphosphate + H(+). The protein operates within amino-acid biosynthesis; L-arginine biosynthesis; L-arginine from L-ornithine and carbamoyl phosphate: step 2/3. In Shewanella sediminis (strain HAW-EB3), this protein is Argininosuccinate synthase.